A 243-amino-acid chain; its full sequence is MTSSVSRPSGRRADALRKVALTRHYTKHAEGSVLVEFGDTKVLCTASVSERVPDFLRDRGQGWLTAEYGMLPRATHTRSDREAARGKQTGRTQEIQRLIGRALRAVFDLEALGPRTIHIDCDVIQADGGTRTASITGAFVAAHDAVSKLIAAGKITRSPITDHVAAISVGVYEGAPVLDLDYAEDSQCDTDMNVVMTGAGGFVEVQGTAEGVPFSRAEMNALLDLAQGGIAELVQLQKDVLGA.

Phosphate is bound by residues R91 and 129-131; that span reads GTR.

Belongs to the RNase PH family. Homohexameric ring arranged as a trimer of dimers.

The catalysed reaction is tRNA(n+1) + phosphate = tRNA(n) + a ribonucleoside 5'-diphosphate. Functionally, phosphorolytic 3'-5' exoribonuclease that plays an important role in tRNA 3'-end maturation. Removes nucleotide residues following the 3'-CCA terminus of tRNAs; can also add nucleotides to the ends of RNA molecules by using nucleoside diphosphates as substrates, but this may not be physiologically important. Probably plays a role in initiation of 16S rRNA degradation (leading to ribosome degradation) during starvation. The polypeptide is Ribonuclease PH (Burkholderia lata (strain ATCC 17760 / DSM 23089 / LMG 22485 / NCIMB 9086 / R18194 / 383)).